The following is a 362-amino-acid chain: Phosphoserine aminotransferase (362 aa).

L-glutamate-binding residues include serine 9 and arginine 42. Pyridoxal 5'-phosphate is bound by residues 76–77, tryptophan 102, threonine 153, aspartate 174, and glutamine 197; that span reads GR. An N6-(pyridoxal phosphate)lysine modification is found at lysine 198. A pyridoxal 5'-phosphate-binding site is contributed by 239-240; sequence NT.

Belongs to the class-V pyridoxal-phosphate-dependent aminotransferase family. SerC subfamily. As to quaternary structure, homodimer. Requires pyridoxal 5'-phosphate as cofactor.

It is found in the cytoplasm. The catalysed reaction is O-phospho-L-serine + 2-oxoglutarate = 3-phosphooxypyruvate + L-glutamate. The enzyme catalyses 4-(phosphooxy)-L-threonine + 2-oxoglutarate = (R)-3-hydroxy-2-oxo-4-phosphooxybutanoate + L-glutamate. It functions in the pathway amino-acid biosynthesis; L-serine biosynthesis; L-serine from 3-phospho-D-glycerate: step 2/3. It participates in cofactor biosynthesis; pyridoxine 5'-phosphate biosynthesis; pyridoxine 5'-phosphate from D-erythrose 4-phosphate: step 3/5. Catalyzes the reversible conversion of 3-phosphohydroxypyruvate to phosphoserine and of 3-hydroxy-2-oxo-4-phosphonooxybutanoate to phosphohydroxythreonine. The chain is Phosphoserine aminotransferase from Escherichia coli (strain ATCC 8739 / DSM 1576 / NBRC 3972 / NCIMB 8545 / WDCM 00012 / Crooks).